The following is a 245-amino-acid chain: tRNA pseudouridine synthase A (245 aa).

Catalysis depends on Asp52, which acts as the Nucleophile. Residue Tyr111 coordinates substrate.

This sequence belongs to the tRNA pseudouridine synthase TruA family. Homodimer.

It carries out the reaction uridine(38/39/40) in tRNA = pseudouridine(38/39/40) in tRNA. In terms of biological role, formation of pseudouridine at positions 38, 39 and 40 in the anticodon stem and loop of transfer RNAs. The polypeptide is tRNA pseudouridine synthase A (Xanthobacter autotrophicus (strain ATCC BAA-1158 / Py2)).